Here is a 340-residue protein sequence, read N- to C-terminus: Delta-aminolevulinic acid dehydratase (340 aa).

Residues Cys-134, Cys-136, and Cys-144 each contribute to the Zn(2+) site. Lys-211 serves as the catalytic Schiff-base intermediate with substrate. Residues Arg-221 and Arg-233 each contribute to the 5-aminolevulinate site. Residue Lys-264 is the Schiff-base intermediate with substrate of the active site. 5-aminolevulinate contacts are provided by Ser-291 and Tyr-330.

Belongs to the ALAD family. Homooctamer. It depends on Zn(2+) as a cofactor.

The enzyme catalyses 2 5-aminolevulinate = porphobilinogen + 2 H2O + H(+). It participates in porphyrin-containing compound metabolism; protoporphyrin-IX biosynthesis; coproporphyrinogen-III from 5-aminolevulinate: step 1/4. Catalyzes an early step in the biosynthesis of tetrapyrroles. Binds two molecules of 5-aminolevulinate per subunit, each at a distinct site, and catalyzes their condensation to form porphobilinogen. The sequence is that of Delta-aminolevulinic acid dehydratase (HEM2) from Eremothecium gossypii (strain ATCC 10895 / CBS 109.51 / FGSC 9923 / NRRL Y-1056) (Yeast).